The sequence spans 567 residues: Protein NRT1/ PTR FAMILY 4.5 (567 aa).

The next 12 membrane-spanning stretches (helical) occupy residues 30–50 (GMLA…AFLA), 70–92 (SSSE…GFLA), 99–118 (FVIF…LLTI), 147–167 (AFLF…KGSL), 189–209 (FFNY…TFVV), 219–239 (WGFG…LLGS), 326–346 (IVLK…CLAQ), 374–394 (VFPV…IIPF), 411–431 (IGVG…VELK), 448–468 (LPIT…ADLF), 491–511 (SLSW…VPIV), and 535–555 (LFYW…LFWA).

The protein belongs to the major facilitator superfamily. Proton-dependent oligopeptide transporter (POT/PTR) (TC 2.A.17) family. Expressed in flowers and siliques.

The protein resides in the membrane. In terms of biological role, involved in abscisic acid transport. The protein is Protein NRT1/ PTR FAMILY 4.5 (NPF4.5) of Arabidopsis thaliana (Mouse-ear cress).